Reading from the N-terminus, the 128-residue chain is Probable cystatin-15 (128 aa).

Positions 1 to 20 (MFWKLPLLLGLLALGPHVCS) are cleaved as a signal peptide. Cys-82 and Cys-92 are joined by a disulfide. An N-linked (GlcNAc...) asparagine glycan is attached at Asn-104. Cys-105 and Cys-125 are disulfide-bonded.

Belongs to the cystatin family.

Its subcellular location is the secreted. The chain is Probable cystatin-15 from Bos taurus (Bovine).